A 206-amino-acid polypeptide reads, in one-letter code: dTTP/UTP pyrophosphatase (206 aa).

Aspartate 79 (proton acceptor) is an active-site residue.

This sequence belongs to the Maf family. YhdE subfamily. Requires a divalent metal cation as cofactor.

It localises to the cytoplasm. The catalysed reaction is dTTP + H2O = dTMP + diphosphate + H(+). It catalyses the reaction UTP + H2O = UMP + diphosphate + H(+). Nucleoside triphosphate pyrophosphatase that hydrolyzes dTTP and UTP. May have a dual role in cell division arrest and in preventing the incorporation of modified nucleotides into cellular nucleic acids. The sequence is that of dTTP/UTP pyrophosphatase from Rhizobium johnstonii (strain DSM 114642 / LMG 32736 / 3841) (Rhizobium leguminosarum bv. viciae).